Reading from the N-terminus, the 588-residue chain is Sulfite reductase [NADPH] hemoprotein beta-component (588 aa).

Over residues 1–10 (MSDKKQKGLE) the composition is skewed to basic and acidic residues. Positions 1–20 (MSDKKQKGLEWQDNPLSDNE) are disordered. Residues Cys443, Cys449, Cys488, and Cys492 each contribute to the [4Fe-4S] cluster site. Siroheme is bound at residue Cys492.

This sequence belongs to the nitrite and sulfite reductase 4Fe-4S domain family. As to quaternary structure, alpha(8)-beta(8). The alpha component is a flavoprotein, the beta component is a hemoprotein. Siroheme serves as cofactor. [4Fe-4S] cluster is required as a cofactor.

It carries out the reaction hydrogen sulfide + 3 NADP(+) + 3 H2O = sulfite + 3 NADPH + 4 H(+). It functions in the pathway sulfur metabolism; hydrogen sulfide biosynthesis; hydrogen sulfide from sulfite (NADPH route): step 1/1. Functionally, component of the sulfite reductase complex that catalyzes the 6-electron reduction of sulfite to sulfide. This is one of several activities required for the biosynthesis of L-cysteine from sulfate. In Mannheimia succiniciproducens (strain KCTC 0769BP / MBEL55E), this protein is Sulfite reductase [NADPH] hemoprotein beta-component.